Reading from the N-terminus, the 97-residue chain is Apolipoprotein C-II (97 aa).

The N-terminal stretch at M1–G22 is a signal peptide. Positions S63–M71 are lipid binding. The tract at residues S75–E97 is lipoprotein lipase cofactor.

This sequence belongs to the apolipoprotein C2 family. As to expression, adult and fetal liver, intestine and peritoneal macrophages.

It localises to the secreted. Component of chylomicrons, very low-density lipoproteins (VLDL), low-density lipoproteins (LDL), and high-density lipoproteins (HDL) in plasma. Plays an important role in lipoprotein metabolism as an activator of lipoprotein lipase. This is Apolipoprotein C-II (Apoc2) from Mus musculus (Mouse).